A 555-amino-acid polypeptide reads, in one-letter code: Glutamine--tRNA ligase (555 aa).

The short motif at Pro34 to His44 is the 'HIGH' region element. ATP is bound by residues Glu35–Asn37 and His41–Ser47. 2 residues coordinate L-glutamine: Asp67 and Tyr212. ATP-binding positions include Thr231, Arg261–Leu262, and Leu269–Lys271. A 'KMSKS' region motif is present at residues Val268 to Arg272.

This sequence belongs to the class-I aminoacyl-tRNA synthetase family. As to quaternary structure, monomer.

The protein localises to the cytoplasm. It catalyses the reaction tRNA(Gln) + L-glutamine + ATP = L-glutaminyl-tRNA(Gln) + AMP + diphosphate. This chain is Glutamine--tRNA ligase, found in Alteromonas mediterranea (strain DSM 17117 / CIP 110805 / LMG 28347 / Deep ecotype).